We begin with the raw amino-acid sequence, 234 residues long: Large ribosomal subunit protein uL1 (234 aa).

Belongs to the universal ribosomal protein uL1 family. Part of the 50S ribosomal subunit.

In terms of biological role, binds directly to 23S rRNA. The L1 stalk is quite mobile in the ribosome, and is involved in E site tRNA release. Protein L1 is also a translational repressor protein, it controls the translation of the L11 operon by binding to its mRNA. The protein is Large ribosomal subunit protein uL1 of Bdellovibrio bacteriovorus (strain ATCC 15356 / DSM 50701 / NCIMB 9529 / HD100).